A 414-amino-acid polypeptide reads, in one-letter code: Serine hydroxymethyltransferase (414 aa).

(6S)-5,6,7,8-tetrahydrofolate contacts are provided by residues leucine 117 and 121-123; that span reads GHL. N6-(pyridoxal phosphate)lysine is present on lysine 226. (6S)-5,6,7,8-tetrahydrofolate contacts are provided by residues glutamate 241 and 349–351; that span reads TPF.

Belongs to the SHMT family. Homodimer. The cofactor is pyridoxal 5'-phosphate.

It localises to the cytoplasm. The enzyme catalyses (6R)-5,10-methylene-5,6,7,8-tetrahydrofolate + glycine + H2O = (6S)-5,6,7,8-tetrahydrofolate + L-serine. The protein operates within one-carbon metabolism; tetrahydrofolate interconversion. It participates in amino-acid biosynthesis; glycine biosynthesis; glycine from L-serine: step 1/1. Catalyzes the reversible interconversion of serine and glycine with tetrahydrofolate (THF) serving as the one-carbon carrier. Also exhibits THF-independent aldolase activity toward beta-hydroxyamino acids, producing glycine and aldehydes, via a retro-aldol mechanism. The sequence is that of Serine hydroxymethyltransferase from Methanothrix thermoacetophila (strain DSM 6194 / JCM 14653 / NBRC 101360 / PT) (Methanosaeta thermophila).